A 51-amino-acid chain; its full sequence is Large ribosomal subunit protein eL39 (51 aa).

The tract at residues Lys32 to Lys51 is disordered. Basic residues predominate over residues Gly33–Lys51.

It belongs to the eukaryotic ribosomal protein eL39 family.

The chain is Large ribosomal subunit protein eL39 from Methanococcus maripaludis (strain C5 / ATCC BAA-1333).